The chain runs to 556 residues: Transcription factor IIIB 70 kDa subunit (556 aa).

A TFIIB-type zinc finger spans residues 8-41; it reads SSRKCKNCGSTDFVRDISNTTNELICKVCGLVTE. Cys-12, Cys-15, Cys-33, and Cys-36 together coordinate Zn(2+). Repeat copies occupy residues 98–174 and 193–272. The interaction with TBP and with the Pol III subunit C34 stretch occupies residues 98–272; it reads LKAVSYALNI…EETLQQRLNE (175 aa). The tract at residues 284–556 is interaction with TBP; it reads KEFRDDETEV…DAINGLFGQK (273 aa). Disordered stretches follow at residues 287–309 and 477–501; these read RDDE…SFDK and ADLA…QSSA. Basic and acidic residues predominate over residues 295 to 309; it reads EGERSAESKPPSFDK. Over residues 486–495 the composition is skewed to basic residues; sequence LRKKRSKRTN.

It belongs to the TFIIB family. As to quaternary structure, TFIIIB comprises the TATA-binding protein (TBP), the B-related factor (BRF) and a 70 kDa polypeptide.

The protein localises to the nucleus. In terms of biological role, general activator of RNA polymerase III transcription. Interacts with TBP. Binds to Pol III subunit C34 and to the TAU135 component of TFIIIC. The protein is Transcription factor IIIB 70 kDa subunit (TDS4) of Kluyveromyces lactis (strain ATCC 8585 / CBS 2359 / DSM 70799 / NBRC 1267 / NRRL Y-1140 / WM37) (Yeast).